An 82-amino-acid polypeptide reads, in one-letter code: Defensin-like protein 7 (82 aa).

The first 29 residues, 1–29, serve as a signal peptide directing secretion; the sequence is MKSSTTSMQLIPTLFFLTILLASPEMVEG. Residue Gln-30 is modified to Pyrrolidone carboxylic acid. Intrachain disulfides connect Cys-33/Cys-77, Cys-44/Cys-64, Cys-50/Cys-71, and Cys-54/Cys-73.

This sequence belongs to the DEFL family. Expressed in stems, roots, rosette leaves and flower buds.

The protein localises to the secreted. In Arabidopsis thaliana (Mouse-ear cress), this protein is Defensin-like protein 7 (LCR75).